Here is a 423-residue protein sequence, read N- to C-terminus: Putative competence-damage inducible protein (423 aa).

It belongs to the CinA family.

This chain is Putative competence-damage inducible protein, found in Streptococcus pyogenes serotype M18 (strain MGAS8232).